Reading from the N-terminus, the 178-residue chain is Protein PilI (178 aa).

A CheW-like domain is found at 34–173 (SWSGIGFRMG…PHALAQHQGF (140 aa)).

May be a part of a signal-transduction system that regulates twitching motility by controlling pilus function (extension and retraction). The protein is Protein PilI (pilI) of Pseudomonas aeruginosa (strain ATCC 15692 / DSM 22644 / CIP 104116 / JCM 14847 / LMG 12228 / 1C / PRS 101 / PAO1).